A 223-amino-acid polypeptide reads, in one-letter code: RNA-free ribonuclease P (223 aa).

This sequence belongs to the HARP family.

It carries out the reaction Endonucleolytic cleavage of RNA, removing 5'-extranucleotides from tRNA precursor.. RNA-free RNase P that catalyzes the removal of the 5'-leader sequence from pre-tRNA to produce the mature 5'-terminus. The sequence is that of RNA-free ribonuclease P from Methanococcus vannielii (strain ATCC 35089 / DSM 1224 / JCM 13029 / OCM 148 / SB).